A 300-amino-acid polypeptide reads, in one-letter code: Light-independent protochlorophyllide reductase iron-sulfur ATP-binding protein (300 aa).

Residues 10–15 and K39 contribute to the ATP site; that span reads GIGKST. Residue S14 participates in Mg(2+) binding. Residues C95 and C129 each coordinate [4Fe-4S] cluster. 180–181 provides a ligand contact to ATP; sequence NR.

Belongs to the NifH/BchL/ChlL family. Homodimer. Protochlorophyllide reductase is composed of three subunits; ChlL, ChlN and ChlB. The cofactor is [4Fe-4S] cluster.

It is found in the plastid. It localises to the chloroplast. It carries out the reaction chlorophyllide a + oxidized 2[4Fe-4S]-[ferredoxin] + 2 ADP + 2 phosphate = protochlorophyllide a + reduced 2[4Fe-4S]-[ferredoxin] + 2 ATP + 2 H2O. It functions in the pathway porphyrin-containing compound metabolism; chlorophyll biosynthesis (light-independent). Component of the dark-operative protochlorophyllide reductase (DPOR) that uses Mg-ATP and reduced ferredoxin to reduce ring D of protochlorophyllide (Pchlide) to form chlorophyllide a (Chlide). This reaction is light-independent. The L component serves as a unique electron donor to the NB-component of the complex, and binds Mg-ATP. The polypeptide is Light-independent protochlorophyllide reductase iron-sulfur ATP-binding protein (Auxenochlorella protothecoides (Green microalga)).